A 193-amino-acid polypeptide reads, in one-letter code: Molybdopterin synthase catalytic subunit (193 aa).

Residues 118-119 (HR), Lys-134, and 141-143 (KKE) each bind substrate. Residues 159 to 193 (DRTTTDGTTASSPAPATRPAKGGGCCGSKVRANES) form a disordered region. Residues 163 to 178 (TDGTTASSPAPATRPA) are compositionally biased toward low complexity.

It belongs to the MoaE family. MOCS2B subfamily. In terms of assembly, heterotetramer; composed of 2 small (MOCS2A) and 2 large (MOCS2B) subunits.

The protein resides in the cytoplasm. The catalysed reaction is 2 [molybdopterin-synthase sulfur-carrier protein]-C-terminal-Gly-aminoethanethioate + cyclic pyranopterin phosphate + H2O = molybdopterin + 2 [molybdopterin-synthase sulfur-carrier protein]-C-terminal Gly-Gly + 2 H(+). It participates in cofactor biosynthesis; molybdopterin biosynthesis. Its function is as follows. Catalytic subunit of the molybdopterin synthase complex, a complex that catalyzes the conversion of precursor Z into molybdopterin. Acts by mediating the incorporation of 2 sulfur atoms from thiocarboxylated MOCS2A into precursor Z to generate a dithiolene group. This Oryza sativa subsp. indica (Rice) protein is Molybdopterin synthase catalytic subunit.